The following is a 336-amino-acid chain: MAASLRLLGAASGLRYWSRRLRPAAGSFAAVCSRSVASKTPVGFIGLGNMGNPMAKNLMKHGYPLIIYDVFPDACKEFQDAGEQVVSSPADVAEKADRIITMLPTSINAIEAYSGANGILKKVKKGSLLIDSSTIDPAVSKELAKEVEKMGAVFMDAPVSGGVGAARSGNLTFMVGGVEDEFAAAQELLGCMGSNVVYCGAVGTGQAAKICNNMLLAISMIGTAEAMNLGIRLGLDPKLLAKILNMSSGRCWSSDTYNPVPGVMDGVPSANNYQGGFGTTLMAKDLGLAQDSATSTKSPILLGSLAHQIYRMMCAKGYSKKDFSSVFQFLREEETF.

The N-terminal 36 residues, 1 to 36 (MAASLRLLGAASGLRYWSRRLRPAAGSFAAVCSRSV), are a transit peptide targeting the mitochondrion. Residue 40–68 (TPVGFIGLGNMGNPMAKNLMKHGYPLIIY) participates in NAD(+) binding. 2 positions are modified to N6-acetyllysine; alternate: K60 and K76. Residues K60 and K76 each carry the N6-succinyllysine; alternate modification. The residue at position 95 (K95) is an N6-succinyllysine. Residues 103–104 (LP) and N108 contribute to the NAD(+) site. Position 121 is an N6-acetyllysine (K121). Residue T134 coordinates NAD(+). The residue at position 141 (K141) is an N6-succinyllysine. K145 carries the N6-acetyllysine modification. Residue K149 is modified to N6-acetyllysine; alternate. An N6-succinyllysine; alternate modification is found at K149. K209 is a catalytic residue. An N6-acetyllysine; alternate mark is found at K238 and K242. An N6-succinyllysine; alternate mark is found at K238 and K242. Residue K284 coordinates NAD(+). The residue at position 297 (K297) is an N6-succinyllysine. K321 bears the N6-acetyllysine; alternate mark. K321 carries the N6-succinyllysine; alternate modification.

The protein belongs to the HIBADH-related family. 3-hydroxyisobutyrate dehydrogenase subfamily. As to quaternary structure, homodimer. In terms of tissue distribution, detected in skin fibroblasts.

It is found in the mitochondrion. It carries out the reaction 3-hydroxy-2-methylpropanoate + NAD(+) = 2-methyl-3-oxopropanoate + NADH + H(+). It participates in amino-acid degradation; L-valine degradation. The chain is 3-hydroxyisobutyrate dehydrogenase, mitochondrial (HIBADH) from Homo sapiens (Human).